Consider the following 708-residue polypeptide: ARF GTPase-activating protein GIT2 (708 aa).

The 124-residue stretch at 1 to 124 (MSKRLRSSDV…AFVHRLPCRE (124 aa)) folds into the Arf-GAP domain. The C4-type zinc finger occupies 11-34 (CADCNGPDPSWASVNRGTFICDEC). 3 ANK repeats span residues 132 to 161 (DLSK…QANF), 166 to 195 (KGST…DPGT), and 199 to 228 (SGKT…ELTD). The tract at residues 376–592 (STQHSTESQD…SPTLPSTEDV (217 aa)) is disordered. Residues 384 to 401 (QDNDQPDYDSVASDEDTD) are compositionally biased toward acidic residues. S393 and S396 each carry phosphoserine. Phosphothreonine is present on T400. A compositionally biased stretch (polar residues) spans 407 to 438 (SKANRQKLQTLQSENSSLRRQATASACQVQTG). A compositionally biased stretch (low complexity) spans 504–518 (TSSSSLPSFPSTLSW). Residues S508, S511, and S519 each carry the phosphoserine modification. Basic and acidic residues predominate over residues 519 to 532 (SRDESARRASRLEK). Position 536 is a phosphothreonine (T536). Position 563 is a phosphoserine (S563).

In terms of assembly, may form heterooligomers with GIT1. Directly interacts with protein Piccolo/PCLO. Interacts with PPFIA1 and PPFIA2. Interacts with ARHGEF7. Identified in a complex with ARHGEF6 and BIN2. Interacts with PAK3. Interacts with PXN/paxillin. Interacts with TGFB1I1. Forms a complex with EFNB1 and GRB4/NCK2. Post-translationally, tyrosine phosphorylated when coexpressed in cells with PTK2/FAK1 and SRC. As to expression, expressed in the brain (at protein level).

Its function is as follows. GTPase-activating protein for ADP ribosylation factor family members, including ARF1. The sequence is that of ARF GTPase-activating protein GIT2 (Git2) from Mus musculus (Mouse).